A 506-amino-acid polypeptide reads, in one-letter code: 2,3-bisphosphoglycerate-independent phosphoglycerate mutase (506 aa).

Residues Asp9 and Ser59 each contribute to the Mn(2+) site. The Phosphoserine intermediate role is filled by Ser59. Residues His120, 149–150, Arg181, Arg187, 254–257, and Lys327 contribute to the substrate site; these read RD and RADR. Mn(2+) contacts are provided by Asp394, His398, Asp435, His436, and His452.

The protein belongs to the BPG-independent phosphoglycerate mutase family. Mn(2+) is required as a cofactor.

The enzyme catalyses (2R)-2-phosphoglycerate = (2R)-3-phosphoglycerate. It functions in the pathway carbohydrate degradation; glycolysis; pyruvate from D-glyceraldehyde 3-phosphate: step 3/5. In terms of biological role, catalyzes the interconversion of 2-phosphoglycerate and 3-phosphoglycerate. This is 2,3-bisphosphoglycerate-independent phosphoglycerate mutase from Natronomonas pharaonis (strain ATCC 35678 / DSM 2160 / CIP 103997 / JCM 8858 / NBRC 14720 / NCIMB 2260 / Gabara) (Halobacterium pharaonis).